A 1993-amino-acid polypeptide reads, in one-letter code: [F-actin]-monooxygenase MICAL3 (1993 aa).

The tract at residues 2–494 (EERKQETTNQ…RHLYDSGETK (493 aa)) is monooxygenase domain. FAD-binding positions include cysteine 97, 116–118 (EKR), 123–125 (RNN), phenylalanine 183, tyrosine 298, and aspartate 398. The 107-residue stretch at 518–624 (VARSSKLLGW…YLTQFYEMFK (107 aa)) folds into the Calponin-homology (CH) domain. Serine 649 carries the phosphoserine modification. The interval 658–704 (GQTISRKRSPKDKKEKDSDGAGKRRKTSQSEEEEPPRSYKGERPTLV) is disordered. The segment covering 669 to 679 (DKKEKDSDGAG) has biased composition (basic and acidic residues). Serine 685 and serine 687 each carry phosphoserine. The 63-residue stretch at 762–824 (DTCYFCQKRV…KPHYCYRLSG (63 aa)) folds into the LIM zinc-binding domain. Residues cysteine 764, cysteine 767, histidine 785, cysteine 788, cysteine 791, cysteine 794, cysteine 814, and histidine 817 each contribute to the Zn(2+) site. A disordered region spans residues 854-886 (NGLASVAASSAERSPGTSMNGLEEPSIAKRLRG). Residues 860 to 873 (AASSAERSPGTSMN) are compositionally biased toward polar residues. Threonine 887 is modified (phosphothreonine). Disordered regions lie at residues 905–1023 (ELEE…RLQQ), 1039–1309 (WTHI…LSGP), 1332–1546 (IRRS…FFTP), and 1559–1837 (KENG…EELK). Positions 938–951 (SEMEEEEEEDDEDD) are enriched in acidic residues. Basic and acidic residues predominate over residues 975–988 (GRSEEELEASKNFE). Serine 977 carries the post-translational modification Phosphoserine. Over residues 989–1014 (PEEEEEEEEYEEEDEEYEEEEEEESS) the composition is skewed to acidic residues. Positions 1039–1051 (WTHIREREAEERM) are enriched in basic and acidic residues. Over residues 1065-1090 (DEDDLEEDADSEPAETEGEAAEDGDP) the composition is skewed to acidic residues. Positions 1111 to 1148 (EAEHRLQSQAKVKAELELRVSENEEEKPSDAPKQEERG) are enriched in basic and acidic residues. Phosphoserine occurs at positions 1131 and 1187. The span at 1199-1212 (LREKPKAEVPEEQK) shows a compositional bias: basic and acidic residues. The span at 1230 to 1239 (SPTSPTSLQP) shows a compositional bias: polar residues. The segment covering 1245-1255 (PPTPPTPPPTQ) has biased composition (pro residues). Over residues 1257–1275 (PICSQPQPSSDASIPSPTK) the composition is skewed to polar residues. Serine 1272 is subject to Phosphoserine. Threonine 1274 carries the phosphothreonine modification. 2 positions are modified to phosphoserine: serine 1276 and serine 1335. Threonine 1339 is modified (phosphothreonine). Serine 1369 and serine 1382 each carry phosphoserine. A compositionally biased stretch (basic and acidic residues) spans 1405–1420 (PSDKELRSSQEERRDL). Positions 1421–1433 (SSSSGLGLHDSSS) are enriched in low complexity. Serine 1431 is subject to Phosphoserine. The span at 1434 to 1452 (NMKTLGSQSFNTSDSTMLT) shows a compositional bias: polar residues. Threonine 1452 carries the phosphothreonine modification. Positions 1454-1465 (PSSPPPPPPPNE) are enriched in pro residues. Over residues 1516–1530 (SVDEIPFADDVEDTY) the composition is skewed to acidic residues. The span at 1584 to 1600 (EAKELAEERMRAREKSV) shows a compositional bias: basic and acidic residues. Polar residues predominate over residues 1623–1633 (SSRSHTAQSQG). Phosphoserine is present on serine 1640. Residues 1665–1685 (SPPSDSGGPDGSVTSSEGSSG) show a composition bias toward low complexity. Residues 1686–1704 (KSKKRSSLFSPRRNKKEKK) are compositionally biased toward basic residues. Serine 1692 and serine 1695 each carry phosphoserine. Over residues 1754 to 1763 (TPSSGATVDS) the composition is skewed to polar residues. Positions 1795-1811 (ILERSSQKSKREPRTYT) are enriched in basic and acidic residues. Positions 1817-1983 (AKLTRRVQKA…EEDKDLEAAM (167 aa)) form a coiled coil. Residues 1819 to 1830 (LTRRVQKAARRQ) are compositionally biased toward basic residues. Residues 1832 to 1981 (KQEELKRLHR…EKEEDKDLEA (150 aa)) enclose the bMERB domain. Serine 1903 carries the post-translational modification Phosphoserine.

It belongs to the Mical family. Interacts with RAB1B, RAB8A, RAB10, RAB13 and RAB15 (in their GTP-bound forms); binding to RAB1B is of low affinity compared to other Rab proteins; at least in case of RAB8A can bind 2 molecules of RAB8A simultaneously through a high and a low affinity binding site, respectively. Interacts with ERC1 and RAB8A; may bridge ERC1 with RAB8A. Interacts with KIF23 and ERC1; enhances the interaction between KIF23 and ERC1. Interacts with NINL. FAD is required as a cofactor.

It localises to the cytoplasm. Its subcellular location is the cell cortex. The protein resides in the cytoskeleton. The protein localises to the nucleus. It is found in the midbody. It localises to the spindle. Its subcellular location is the cilium basal body. It carries out the reaction L-methionyl-[F-actin] + NADPH + O2 + H(+) = L-methionyl-(R)-S-oxide-[F-actin] + NADP(+) + H2O. In terms of biological role, monooxygenase that promotes depolymerization of F-actin by mediating oxidation of specific methionine residues on actin to form methionine-sulfoxide, resulting in actin filament disassembly and preventing repolymerization. In the absence of actin, it also functions as a NADPH oxidase producing H(2)O(2). Seems to act as Rab effector protein and play a role in vesicle trafficking. Involved in exocytic vesicles tethering and fusion: the monooxygenase activity is required for this process and implicates RAB8A associated with exocytotic vesicles. Required for cytokinesis. Contributes to stabilization and/or maturation of the intercellular bridge independently of its monooxygenase activity. Promotes recruitment of Rab8 and ERC1 to the intercellular bridge, and together these proteins are proposed to function in timely abscission. In Mus musculus (Mouse), this protein is [F-actin]-monooxygenase MICAL3 (Mical3).